The primary structure comprises 1135 residues: Protocadherin-18 (1135 aa).

An N-terminal signal peptide occupies residues 1–27; it reads MHQMNAKMHFRFVFALLIVSFNHDVLG. 6 Cadherin domains span residues 28-137, 138-246, 247-354, 361-465, 466-576, and 582-688; these read KNLK…SPQF, SRSL…SPAF, EQQS…KPEI, PGKE…PPHF, QRSR…VPVV, and RNNT…STAM. Over 28–699 the chain is Extracellular; it reads KNLKYRIYEE…SVSQASLDVS (672 aa). N-linked (GlcNAc...) asparagine glycosylation is present at Asn103. N-linked (GlcNAc...) asparagine glycans are attached at residues Asn269, Asn420, Asn559, Asn583, and Asn641. A helical transmembrane segment spans residues 700–720; the sequence is MIIIISLGAICAVLLVIMVLF. Residues 721–1135 lie on the Cytoplasmic side of the membrane; it reads ATRCNREKKD…NKLLQDVRQS (415 aa). 4 disordered regions span residues 769–800, 869–889, 942–1003, and 1023–1046; these read LPIR…NSHQ, SLKD…DLGR, DYRS…STSS, and YSEC…PAKT. Over residues 791–800 the composition is skewed to polar residues; the sequence is GSRQSHNSHQ. Basic and acidic residues predominate over residues 869-878; sequence SLKDSGRGDS. The tract at residues 893–1135 is interaction with DAB1; that stretch reads IDRLLGEGFS…NKLLQDVRQS (243 aa). Over residues 1028-1039 the composition is skewed to basic and acidic residues; that stretch reads EVDRSNSLERRK.

In terms of assembly, interacts with DAB1. As to expression, expressed in all tissues, with highest expression in lung and ovary.

The protein resides in the cell membrane. Functionally, potential calcium-dependent cell-adhesion protein. In Homo sapiens (Human), this protein is Protocadherin-18 (PCDH18).